A 494-amino-acid polypeptide reads, in one-letter code: UPF0371 protein SPy_1343/M5005_Spy1095 (494 aa).

It belongs to the UPF0371 family.

This Streptococcus pyogenes serotype M1 protein is UPF0371 protein SPy_1343/M5005_Spy1095.